We begin with the raw amino-acid sequence, 234 residues long: Leucyl/phenylalanyl-tRNA--protein transferase (234 aa).

It belongs to the L/F-transferase family.

The protein localises to the cytoplasm. The enzyme catalyses N-terminal L-lysyl-[protein] + L-leucyl-tRNA(Leu) = N-terminal L-leucyl-L-lysyl-[protein] + tRNA(Leu) + H(+). The catalysed reaction is N-terminal L-arginyl-[protein] + L-leucyl-tRNA(Leu) = N-terminal L-leucyl-L-arginyl-[protein] + tRNA(Leu) + H(+). It catalyses the reaction L-phenylalanyl-tRNA(Phe) + an N-terminal L-alpha-aminoacyl-[protein] = an N-terminal L-phenylalanyl-L-alpha-aminoacyl-[protein] + tRNA(Phe). Functions in the N-end rule pathway of protein degradation where it conjugates Leu, Phe and, less efficiently, Met from aminoacyl-tRNAs to the N-termini of proteins containing an N-terminal arginine or lysine. The protein is Leucyl/phenylalanyl-tRNA--protein transferase of Escherichia coli O81 (strain ED1a).